The following is an 823-amino-acid chain: Ubiquitin carboxyl-terminal hydrolase 16 (823 aa).

The segment at 22-142 (PVCRHIRKGL…QVVDYVRKQA (121 aa)) adopts a UBP-type zinc-finger fold. Cysteine 24, histidine 26, cysteine 48, cysteine 51, cysteine 74, cysteine 77, cysteine 82, histidine 90, histidine 94, histidine 103, cysteine 116, and cysteine 119 together coordinate Zn(2+). Residue lysine 140 forms a Glycyl lysine isopeptide (Lys-Gly) (interchain with G-Cter in SUMO2) linkage. Residues 146-189 (TPKPAEKDNGNIELENKKLEKESKNEQEREKKENMAKENPPMNS) are disordered. Basic and acidic residues predominate over residues 149–181 (PAEKDNGNIELENKKLEKESKNEQEREKKENMA). Phosphoserine is present on serine 189. Positions 196–822 (KGLSNLGNTC…QAYLLFYERI (627 aa)) constitute a USP domain. Cysteine 205 (nucleophile) is an active-site residue. The span at 394–408 (SGKKSVNDKNLKKTV) shows a compositional bias: basic and acidic residues. Residues 394-460 (SGKKSVNDKN…AKNQRRQQKI (67 aa)) form a disordered region. A compositionally biased stretch (acidic residues) spans 409–420 (EDEDQDSEEEKD). Serine 415 is modified (phosphoserine). Positions 421-430 (NDSYIKERSD) are enriched in basic and acidic residues. The span at 438 to 458 (HLQKKAKKQAKKQAKNQRRQQ) shows a compositional bias: basic residues. Serine 531 and serine 552 each carry phosphoserine. Threonine 554 is modified (phosphothreonine). Histidine 758 serves as the catalytic Proton acceptor.

Belongs to the peptidase C19 family. USP16 subfamily. Homotetramer. Associates with late pre-40S ribosomes. Interacts with CEP78; promoting deubiquitination of tektins. In terms of processing, phosphorylated at the onset of mitosis and dephosphorylated during the metaphase/anaphase transition. Phosphorylation by AURKB enhances the deubiquitinase activity. In terms of tissue distribution, present in all the tissues examined including fetal brain, lung, liver, kidney, and adult heart, brain, placenta, lung, liver, skeletal muscle, kidney and pancreas.

The protein localises to the nucleus. The protein resides in the cytoplasm. The enzyme catalyses Thiol-dependent hydrolysis of ester, thioester, amide, peptide and isopeptide bonds formed by the C-terminal Gly of ubiquitin (a 76-residue protein attached to proteins as an intracellular targeting signal).. Functionally, specifically deubiquitinates 'Lys-120' of histone H2A (H2AK119Ub), a specific tag for epigenetic transcriptional repression, thereby acting as a coactivator. Deubiquitination of histone H2A is a prerequisite for subsequent phosphorylation at 'Ser-11' of histone H3 (H3S10ph), and is required for chromosome segregation when cells enter into mitosis. In resting B- and T-lymphocytes, phosphorylation by AURKB leads to enhance its activity, thereby maintaining transcription in resting lymphocytes. Regulates Hox gene expression via histone H2A deubiquitination. Prefers nucleosomal substrates. Does not deubiquitinate histone H2B. Also deubiquitinates non-histone proteins, such as ribosomal protein RPS27A: deubiquitination of monoubiquitinated RPS27A promotes maturation of the 40S ribosomal subunit. Also mediates deubiquitination of tektin proteins (TEKT1, TEKT2, TEK3, TEKT4 and TEKT5), promoting their stability. The polypeptide is Ubiquitin carboxyl-terminal hydrolase 16 (Homo sapiens (Human)).